We begin with the raw amino-acid sequence, 92 residues long: Protein S100-B (92 aa).

Residue Ser2 is modified to N-acetylserine. 2 consecutive EF-hand domains span residues Asp13 to Ile48 and Lys49 to Ala84. His16 lines the Zn(2+) pocket. Residues Ser19, Glu22, and Asp24 each coordinate Ca(2+). His26 contacts Zn(2+). Residues Asp62, Asp64, Asp66, Glu68, and Glu73 each contribute to the Ca(2+) site. 2 residues coordinate Zn(2+): His86 and His91.

The protein belongs to the S-100 family. In terms of assembly, dimer of either two alpha chains, or two beta chains, or one alpha and one beta chain. The S100B dimer binds two molecules of STK38. Interacts with CACYBP in a calcium-dependent manner. Interacts with ATAD3A; this interaction probably occurs in the cytosol prior to ATAD3A mitochondrial targeting. Interacts with S100A6. The S100B dimer interacts with two molecules of CAPZA1. Interacts with AGER. Interacts with PPP5C (via TPR repeats); the interaction is calcium-dependent and modulates PPP5C activity. Interacts with TPPP; this interaction inhibits TPPP dimerization. Interacts with isoform CLSTN3beta of CLSTN3; interaction promotes secretion.

The protein resides in the cytoplasm. It localises to the nucleus. Its subcellular location is the secreted. Small zinc- and- and calcium-binding protein that is highly expressed in astrocytes and constitutes one of the most abundant soluble proteins in brain. Weakly binds calcium but binds zinc very tightly-distinct binding sites with different affinities exist for both ions on each monomer. Physiological concentrations of potassium ion antagonize the binding of both divalent cations, especially affecting high-affinity calcium-binding sites. Acts as a neurotrophic factor that promotes astrocytosis and axonal proliferation. Involved in innervation of thermogenic adipose tissue by acting as an adipocyte-derived neurotrophic factor that promotes sympathetic innervation of adipose tissue. Binds to and initiates the activation of STK38 by releasing autoinhibitory intramolecular interactions within the kinase. Interaction with AGER after myocardial infarction may play a role in myocyte apoptosis by activating ERK1/2 and p53/TP53 signaling. Could assist ATAD3A cytoplasmic processing, preventing aggregation and favoring mitochondrial localization. May mediate calcium-dependent regulation on many physiological processes by interacting with other proteins, such as TPR-containing proteins, and modulating their activity. This Mus musculus (Mouse) protein is Protein S100-B.